The sequence spans 372 residues: Envelope phospholipase OPG057 (372 aa).

Residues 153-156 (YPPL) carry the YPPL motif. S-palmitoyl cysteine; by host attachment occurs at residues C185 and C186. The 28-residue stretch at 307–334 (FTIQNNTKLLIVDDEYVHITSANFDGTH) folds into the PLD phosphodiesterase domain.

The protein belongs to the orthopoxvirus OPG057 family. Interacts with protein OPG190. Post-translationally, palmitoylated. Attachment of the palmitate moiety is essential for correct intracellular targeting and protein function.

It is found in the virion membrane. Its subcellular location is the host Golgi apparatus. The protein resides in the host trans-Golgi network. It localises to the host endoplasmic reticulum membrane. The enzyme catalyses a 1,2-diacyl-sn-glycero-3-phosphocholine + H2O = a 1,2-diacyl-sn-glycero-3-phosphate + choline + H(+). Major envelope protein that plays a role in the biogenesis of the viral double membrane and in egress of virus from the host cell. Produces the wrapped form of virus that is required for cell-to-cell spread. Acts as a lipase with broad specificity including phospholipase C, phospholipase A, and triacylglycerol lipase activities. The protein is Envelope phospholipase OPG057 (OPG057) of Cynomys gunnisoni (Gunnison's prairie dog).